Here is a 90-residue protein sequence, read N- to C-terminus: Small ribosomal subunit protein uS15c (90 aa).

It belongs to the universal ribosomal protein uS15 family. As to quaternary structure, part of the 30S ribosomal subunit.

It is found in the plastid. It localises to the chloroplast. The polypeptide is Small ribosomal subunit protein uS15c (rps15-A) (Hordeum vulgare (Barley)).